The primary structure comprises 144 residues: Complexin-1 (144 aa).

Over residues 1–10 (MVSFLGGGLL) the composition is skewed to gly residues. The segment at 1–119 (MVSFLGGGLL…SGFPKNLDDL (119 aa)) is disordered. Composition is skewed to basic and acidic residues over residues 18–27 (LEEKEDKKEG) and 36–86 (AEAK…EGRL). The stretch at 29-67 (EEEDPEIAEAKREAEEKRNEKYRKMEEEREVMRQGIRDK) forms a coiled coil. Polar residues predominate over residues 103-112 (LQSSAQSSGF). At C141 the chain carries Cysteine methyl ester. C141 is lipidated: S-farnesyl cysteine. The propeptide at 142–144 (NLQ) is removed in mature form.

This sequence belongs to the complexin/synaphin family. As to quaternary structure, binds to the SNARE core complex containing SNAP25, synaptobrevin and syntaxin-1. Expressed in a subset of neurons in the central nervous system, including large serotoninergic Retzius neurons and pressure-sensitive P cells.

Its subcellular location is the membrane. In terms of biological role, positively regulates a late step in synaptic vesicle exocytosis. The protein is Complexin-1 (cpx1) of Hirudo medicinalis (Medicinal leech).